Consider the following 419-residue polypeptide: Pygopus homolog 1 (419 aa).

2 disordered regions span residues Met1–Asp64 and His175–Asp338. Residues Gly18–Val30 are compositionally biased toward gly residues. The short motif at Pro35–Lys41 is the Nuclear localization signal element. Composition is skewed to polar residues over residues His175–Ser221 and Asp240–Ala255. The segment covering Val276–Asn286 has biased composition (low complexity). Positions Ser287–Pro307 are enriched in polar residues. Residues Val340–Asp398 form a PHD-type zinc finger. Residues Tyr341–Ala388 form an interaction with H3K4me2 region. Positions Gly373 to Gly391 are interaction with BCL9.

Interacts with BCL9 via The PHD-type zinc finger motiv, and thereby becomes part of the nuclear beta-catenin/TCF complex. Identified in a complex with BCL9L, CDC73, CTNNB1 and PYGO1. Interacts with histone H3 mono-, di- or tri-methylated at 'Lys4' (H3K4me1, H3K4me2, H3K4me3); the interaction is enhanced by the interaction with BCL9.

The protein localises to the nucleus. Functionally, involved in signal transduction through the Wnt pathway. The chain is Pygopus homolog 1 (PYGO1) from Homo sapiens (Human).